The primary structure comprises 410 residues: Phytoene synthase 1, chloroplastic (410 aa).

The transit peptide at methionine 1 to tyrosine 62 directs the protein to the chloroplast.

Belongs to the phytoene/squalene synthase family. Monomer. Expressed in embryos, endosperm and seedling leaves. Expressed in leaves and endosperm.

It is found in the plastid. It localises to the chloroplast stroma. The catalysed reaction is 2 (2E,6E,10E)-geranylgeranyl diphosphate = 15-cis-phytoene + 2 diphosphate. It participates in carotenoid biosynthesis; phytoene biosynthesis; all-trans-phytoene from geranylgeranyl diphosphate: step 1/1. Catalyzes the conversion of geranylgeranyl diphosphate to phytoene. Mediates the first committed step in carotenoid biosynthesis. The protein is Phytoene synthase 1, chloroplastic of Zea mays (Maize).